The primary structure comprises 226 residues: Lysoplasmalogenase TMEM86B (226 aa).

The Cytoplasmic portion of the chain corresponds to 1–23 (MDAGKAGQTLKTHCSAQRPDVCR). Residues 24 to 40 (WLSPFILSCCVYFCLWI) form a helical membrane-spanning segment. Residues 41-46 (PEDQLS) are Extracellular-facing. A helical transmembrane segment spans residues 47 to 67 (WFAALVKCLPVLCLAGFLWVM). Residues 68–75 (SPSGGYTQ) lie on the Cytoplasmic side of the membrane. The chain crosses the membrane as a helical span at residues 76–93 (LLQGALVCSAVGDACLIW). At 94 to 100 (PAAFVPG) the chain is on the extracellular side. Residues 101–117 (MAAFATAHLLYVWAFGF) traverse the membrane as a helical segment. Topologically, residues 118–123 (SPLQPG) are cytoplasmic. A helical membrane pass occupies residues 124 to 140 (LLLLIILAPGPYLSLVL). Topologically, residues 141 to 146 (QHLEPD) are extracellular. The chain crosses the membrane as a helical span at residues 147 to 163 (MVLPVAAYGLILMAMLW). The Cytoplasmic segment spans residues 164 to 171 (RGLAQGGS). A helical membrane pass occupies residues 172-188 (AGWGALLFTLSDGVLAW). Topologically, residues 189–199 (DTFAQPLPHAH) are extracellular. A helical membrane pass occupies residues 200–218 (LVIMTTYYAAQLLITLSAL). Residues 219–226 (RSPVPKTD) lie on the Cytoplasmic side of the membrane.

This sequence belongs to the TMEM86 family. As to quaternary structure, homodimer.

Its subcellular location is the endoplasmic reticulum membrane. It localises to the cytoplasm. The catalysed reaction is a 1-O-(1Z-alkenyl)-sn-glycero-3-phosphocholine + H2O = a 2,3-saturated aldehyde + sn-glycerol 3-phosphocholine. It catalyses the reaction a 1-O-(1Z-alkenyl)-sn-glycero-3-phosphoethanolamine + H2O = a 2,3-saturated aldehyde + sn-glycero-3-phosphoethanolamine. Its activity is regulated as follows. Competitively inhibited by lysophosphatidic acid. Functionally, catalyzes the hydrolysis of the vinyl ether bond of choline or ethanolamine lysoplasmalogens, forming fatty aldehyde and glycerophosphocholine or glycerophosphoethanolamine, respectively and is specific for the sn-2-deacylated (lyso) form of plasmalogen. This chain is Lysoplasmalogenase TMEM86B (TMEM86B), found in Homo sapiens (Human).